The following is a 487-amino-acid chain: Kynureninase 1 (487 aa).

Residues Leu-147, Thr-148, 175–178, Ser-232, Asp-261, His-264, and Tyr-286 each bind pyridoxal 5'-phosphate; that span reads FPSD. Residue Lys-287 is modified to N6-(pyridoxal phosphate)lysine. 2 residues coordinate pyridoxal 5'-phosphate: Trp-327 and Asn-355.

It belongs to the kynureninase family. In terms of assembly, homodimer. Requires pyridoxal 5'-phosphate as cofactor.

It localises to the cytoplasm. It catalyses the reaction L-kynurenine + H2O = anthranilate + L-alanine + H(+). The enzyme catalyses 3-hydroxy-L-kynurenine + H2O = 3-hydroxyanthranilate + L-alanine + H(+). The protein operates within amino-acid degradation; L-kynurenine degradation; L-alanine and anthranilate from L-kynurenine: step 1/1. It participates in cofactor biosynthesis; NAD(+) biosynthesis; quinolinate from L-kynurenine: step 2/3. Catalyzes the cleavage of L-kynurenine (L-Kyn) and L-3-hydroxykynurenine (L-3OHKyn) into anthranilic acid (AA) and 3-hydroxyanthranilic acid (3-OHAA), respectively. This is Kynureninase 1 (bna5-1) from Aspergillus oryzae (strain ATCC 42149 / RIB 40) (Yellow koji mold).